Here is a 250-residue protein sequence, read N- to C-terminus: uncharacterized protein (250 aa).

The first 24 residues, 1–24 (MKGFLKPNFSLGALFLTLSPIATA), serve as a signal peptide directing secretion. The N-palmitoyl cysteine moiety is linked to residue C25. Residue C25 is the site of S-diacylglycerol cysteine attachment. Residues 44–200 (RLRKARVNHW…FNNRKNIFSY (157 aa)) enclose the TNase-like domain.

The protein localises to the cell membrane. This is an uncharacterized protein from Mycoplasma genitalium (strain ATCC 33530 / DSM 19775 / NCTC 10195 / G37) (Mycoplasmoides genitalium).